We begin with the raw amino-acid sequence, 370 residues long: Formate dehydrogenase (370 aa).

The substrate site is built by Ile94 and Asn120. NAD(+)-binding positions include 175–176 (RI), Asp196, 231–235 (PLHES), Thr257, Asp283, and 312–315 (HMSG).

The protein belongs to the D-isomer specific 2-hydroxyacid dehydrogenase family. FDH subfamily. As to quaternary structure, homodimer.

It is found in the cytoplasm. The catalysed reaction is formate + NAD(+) = CO2 + NADH. Functionally, catalyzes the NAD(+)-dependent oxidation of formate to carbon dioxide. Formate oxidation is the final step in the methanol oxidation pathway in methylotrophic microorganisms. Has a role in the detoxification of exogenous formate in non-methylotrophic organisms. In Chaetomium thermophilum (strain DSM 1495 / CBS 144.50 / IMI 039719) (Thermochaetoides thermophila), this protein is Formate dehydrogenase.